The sequence spans 719 residues: Phenylalanine--tRNA ligase beta subunit, chloroplastic (719 aa).

One can recognise a B5 domain in the interval 318-403; that stretch reads DHALNINLSI…RIYGYHKFRS (86 aa). Positions 381, 387, 390, and 391 each coordinate Mg(2+). The 94-residue stretch at 625–718 folds into the FDX-ACB domain; it reads SKYPSIIRDL…IVKQLNLKIR (94 aa).

This sequence belongs to the phenylalanyl-tRNA synthetase beta subunit family. Type 1 subfamily. Tetramer of two alpha and two beta subunits. Mg(2+) serves as cofactor.

The protein resides in the plastid. It is found in the chloroplast. It catalyses the reaction tRNA(Phe) + L-phenylalanine + ATP = L-phenylalanyl-tRNA(Phe) + AMP + diphosphate + H(+). The chain is Phenylalanine--tRNA ligase beta subunit, chloroplastic from Pyropia yezoensis (Susabi-nori).